A 239-amino-acid polypeptide reads, in one-letter code: Octanoyltransferase (239 aa).

In terms of domain architecture, BPL/LPL catalytic spans 48–236; sequence DGGDELVWLV…AFEAVFGETT (189 aa). Substrate-binding positions include 87–94, 167–169, and 180–182; these read RGGEYTYH, ALG, and GLS. The Acyl-thioester intermediate role is filled by Cys-198.

Belongs to the LipB family.

It is found in the cytoplasm. The enzyme catalyses octanoyl-[ACP] + L-lysyl-[protein] = N(6)-octanoyl-L-lysyl-[protein] + holo-[ACP] + H(+). Its pathway is protein modification; protein lipoylation via endogenous pathway; protein N(6)-(lipoyl)lysine from octanoyl-[acyl-carrier-protein]: step 1/2. Catalyzes the transfer of endogenously produced octanoic acid from octanoyl-acyl-carrier-protein onto the lipoyl domains of lipoate-dependent enzymes. Lipoyl-ACP can also act as a substrate although octanoyl-ACP is likely to be the physiological substrate. This Rhizobium johnstonii (strain DSM 114642 / LMG 32736 / 3841) (Rhizobium leguminosarum bv. viciae) protein is Octanoyltransferase.